We begin with the raw amino-acid sequence, 340 residues long: Ubiquitin-like domain-containing CTD phosphatase (340 aa).

The region spanning 24–101 (LTLTVKWNGK…MTMIGTVEDD (78 aa)) is the Ubiquitin-like domain. An FCP1 homology domain is found at 151–312 (CRQGKKLLVL…VKLTQYLLTI (162 aa)). The segment at 151–312 (CRQGKKLLVL…VKLTQYLLTI (162 aa)) is phosphatase. Asp161, Asp163, and Asp271 together coordinate Mg(2+).

The cofactor is Mg(2+).

Its subcellular location is the nucleus. The catalysed reaction is O-phospho-L-seryl-[protein] + H2O = L-seryl-[protein] + phosphate. It catalyses the reaction O-phospho-L-threonyl-[protein] + H2O = L-threonyl-[protein] + phosphate. Its function is as follows. Dephosphorylates 26S nuclear proteasomes, thereby decreasing their proteolytic activity. The dephosphorylation may prevent assembly of the core and regulatory particles (CP and RP) into mature 26S proteasome. The polypeptide is Ubiquitin-like domain-containing CTD phosphatase (Arabidopsis thaliana (Mouse-ear cress)).